The primary structure comprises 92 residues: Small ribosomal subunit protein uS19 (92 aa).

Belongs to the universal ribosomal protein uS19 family.

Its function is as follows. Protein S19 forms a complex with S13 that binds strongly to the 16S ribosomal RNA. This is Small ribosomal subunit protein uS19 from Staphylococcus epidermidis (strain ATCC 35984 / DSM 28319 / BCRC 17069 / CCUG 31568 / BM 3577 / RP62A).